Here is a 578-residue protein sequence, read N- to C-terminus: Kelch-like protein 30 (578 aa).

The region spanning Ala-33 to Gln-100 is the BTB domain. The BACK domain maps to Lys-153 to Gly-255. 6 Kelch repeats span residues Val-270–Asn-326, Asn-327–Gly-377, Glu-378–Gly-422, Leu-424–Gly-471, Leu-473–Asp-513, and Ala-514–Leu-563.

This chain is Kelch-like protein 30 (KLHL30), found in Homo sapiens (Human).